A 101-amino-acid chain; its full sequence is Urease subunit beta (101 aa).

The protein belongs to the urease beta subunit family. In terms of assembly, heterotrimer of UreA (gamma), UreB (beta) and UreC (alpha) subunits. Three heterotrimers associate to form the active enzyme.

It is found in the cytoplasm. It carries out the reaction urea + 2 H2O + H(+) = hydrogencarbonate + 2 NH4(+). The protein operates within nitrogen metabolism; urea degradation; CO(2) and NH(3) from urea (urease route): step 1/1. The protein is Urease subunit beta of Rhodopseudomonas palustris (strain HaA2).